Consider the following 474-residue polypeptide: PRAME family member 17 (474 aa).

Residues 97-124 (RWKLQVLDLRDVDGNFWTIWSGARALSC) form an LRR 1; degenerate repeat. Residues 179-203 (HLCCNKVQNYSMPTSSFRNLLKRVY) form an LRR 2; degenerate repeat. One copy of the LRR 3; degenerate repeat lies at 204–230 (PDSIQELEIKRKCSLNKTGKFAPYLSQ). An LRR 4; degenerate repeat occupies 231-265 (MSNLRKLFLAFGYDDELYVSGQQQFVPDLDCPFLC). LRR repeat units lie at residues 266-291 (LYYPQMLYIRKISNIKEHLEHLLRCL), 292-323 (KNPLGTFIFCHAYLADQDMECLSQYPSLSQLK), 324-342 (ELHLIHILMWTTNLEPLGA), 348-375 (AATLEILTLKDCQIQDSQLRVLLPALSR), and 376-400 (CSQLTTFYFRGNETSTNALKDLLCH).

It belongs to the PRAME family.

This Homo sapiens (Human) protein is PRAME family member 17.